The following is a 125-amino-acid chain: Glucose-1-phosphate adenylyltransferase small subunit (125 aa).

The protein belongs to the bacterial/plant glucose-1-phosphate adenylyltransferase family. In terms of assembly, heterotetramer. Leaves.

The protein localises to the plastid. The protein resides in the chloroplast. It localises to the amyloplast. The enzyme catalyses alpha-D-glucose 1-phosphate + ATP + H(+) = ADP-alpha-D-glucose + diphosphate. The protein operates within glycan biosynthesis; starch biosynthesis. With respect to regulation, activated by 3'phosphoglycerate, inhibited by orthophosphate. Allosteric regulation. Its function is as follows. This protein plays a role in synthesis of starch. It catalyzes the synthesis of the activated glycosyl donor, ADP-glucose from Glc-1-P and ATP. This chain is Glucose-1-phosphate adenylyltransferase small subunit (GLG1), found in Zea mays (Maize).